The following is a 556-amino-acid chain: DNA ligase B (556 aa).

Lysine 124 acts as the N6-AMP-lysine intermediate in catalysis.

This sequence belongs to the NAD-dependent DNA ligase family. LigB subfamily.

The catalysed reaction is NAD(+) + (deoxyribonucleotide)n-3'-hydroxyl + 5'-phospho-(deoxyribonucleotide)m = (deoxyribonucleotide)n+m + AMP + beta-nicotinamide D-nucleotide.. Its function is as follows. Catalyzes the formation of phosphodiester linkages between 5'-phosphoryl and 3'-hydroxyl groups in double-stranded DNA using NAD as a coenzyme and as the energy source for the reaction. The protein is DNA ligase B of Pseudomonas fluorescens (strain ATCC BAA-477 / NRRL B-23932 / Pf-5).